A 264-amino-acid chain; its full sequence is tRNA pseudouridine synthase A (264 aa).

The active-site Nucleophile is the D51. Y109 contributes to the substrate binding site.

Belongs to the tRNA pseudouridine synthase TruA family. In terms of assembly, homodimer.

It catalyses the reaction uridine(38/39/40) in tRNA = pseudouridine(38/39/40) in tRNA. In terms of biological role, formation of pseudouridine at positions 38, 39 and 40 in the anticodon stem and loop of transfer RNAs. The sequence is that of tRNA pseudouridine synthase A from Pasteurella multocida (strain Pm70).